Reading from the N-terminus, the 92-residue chain is MARSLKKNPFVANHLLGKIEKLNMREEKEIIVTWSRASTIIPTMIGHTIAIHNGKEHLPIYITDRMVGHKLGEFAPTLTFRGHARNDNRSRR.

The protein belongs to the universal ribosomal protein uS19 family.

The protein localises to the plastid. The protein resides in the chloroplast. Functionally, protein S19 forms a complex with S13 that binds strongly to the 16S ribosomal RNA. The protein is Small ribosomal subunit protein uS19c of Illicium oligandrum (Star anise).